The primary structure comprises 352 residues: Gap junction alpha-4 protein (352 aa).

Topologically, residues 2 to 23 (GDWEFLEKLLDQVQEHSTSIGK) are cytoplasmic. The chain crosses the membrane as a helical span at residues 24–46 (IWLMVLFIFRILILGLAGESVWG). Topologically, residues 47–76 (DEQSDFTCNTEQPGCTNVCYDKAFPISHVR) are extracellular. The chain crosses the membrane as a helical span at residues 77-99 (YWVLQFLFVSTPTLFYLGHVIYL). The Cytoplasmic portion of the chain corresponds to 100 to 153 (SRKEEKLKQKESELRALDDKEQVEQAIAIIEKKKLKLYIQEDGTVKIKGALMYT). A helical membrane pass occupies residues 154–176 (YLTSVIFKSIFEAGFLLGQWYLY). Over 177–208 (GFVMTPIYVCERVPCPHKVDCFVSRPMEKTIF) the chain is Extracellular. Residues 209-231 (IIFMLVVSLISLFLNVLELIHLI) form a helical membrane-spanning segment. Topologically, residues 232 to 352 (CKSMIHALKK…SSSASKKQYV (121 aa)) are cytoplasmic. A disordered region spans residues 332-352 (HSTVEKASTRASSSASKKQYV). A compositionally biased stretch (low complexity) spans 340 to 352 (TRASSSASKKQYV).

The protein belongs to the connexin family. Alpha-type (group II) subfamily. A connexon is composed of a hexamer of connexins. Expressed in ovarian somatic cells, heart, leg muscle, liver and eye but not in brain.

It localises to the cell membrane. It is found in the cell junction. The protein resides in the gap junction. Functionally, one gap junction consists of a cluster of closely packed pairs of transmembrane channels, the connexons, through which materials of low MW diffuse from one cell to a neighboring cell. The protein is Gap junction alpha-4 protein (gja4) of Xenopus laevis (African clawed frog).